Consider the following 131-residue polypeptide: Small ribosomal subunit protein uS8 (131 aa).

This sequence belongs to the universal ribosomal protein uS8 family. Part of the 30S ribosomal subunit. Contacts proteins S5 and S12.

One of the primary rRNA binding proteins, it binds directly to 16S rRNA central domain where it helps coordinate assembly of the platform of the 30S subunit. The chain is Small ribosomal subunit protein uS8 from Dictyoglomus turgidum (strain DSM 6724 / Z-1310).